A 371-amino-acid polypeptide reads, in one-letter code: Interstrand DNA cross-link repair glycosylase (371 aa).

The QXQ; important for activity motif lies at 37–39 (QAQ).

This sequence belongs to the DNA glycosylase AlkZ-like family.

Its function is as follows. DNA glycosylase involved in the repair of interstrand DNA cross-links (ICLs), which are highly toxic DNA lesions that covalently tether the opposing strands of DNA, thereby inhibiting essential cellular processes such as DNA replication and transcription. Acts by unhooking both sides of the ICLs, forming abasic (AP) sites on both strands. AlkZ specifically repairs DNA damage induced by azinomycin B (AZB), a natural product with potent antibiotic and antitumor activities that interacts covalently with duplex DNA and forms ICLs. AlkZ thus confers self-resistance to azinomycin B, which is produced by S.sahachiroi. It may also protect target sites by protein-DNA interaction. Binds sequence non-specifically to native DNA and structure-specifically to azinomycin B-modified sites, with higher affinity to azinomycin B-modified sites and lower affinity to native DNA duplex. In vitro, also acts on monoadducts and can catalyze the excision of N7-methylguanine (7mGua) from an oligonucleotide containing N7-methyldeoxyguanosine (d7mG). Is a monofunctional DNA glycosylase that does not have lyase activity. This is Interstrand DNA cross-link repair glycosylase from Streptomyces sahachiroi.